Reading from the N-terminus, the 298-residue chain is Acetylglutamate kinase (298 aa).

Residues 69–70, Arg-91, and Asn-196 contribute to the substrate site; that span reads GG.

This sequence belongs to the acetylglutamate kinase family. ArgB subfamily.

The protein resides in the cytoplasm. It carries out the reaction N-acetyl-L-glutamate + ATP = N-acetyl-L-glutamyl 5-phosphate + ADP. It functions in the pathway amino-acid biosynthesis; L-arginine biosynthesis; N(2)-acetyl-L-ornithine from L-glutamate: step 2/4. Catalyzes the ATP-dependent phosphorylation of N-acetyl-L-glutamate. The sequence is that of Acetylglutamate kinase from Rhodopseudomonas palustris (strain TIE-1).